The chain runs to 336 residues: Ferredoxin--NADP reductase (336 aa).

Residues Asp-37, Gln-45, Tyr-50, Val-90, Phe-124, Asp-286, and Thr-327 each contribute to the FAD site.

The protein belongs to the ferredoxin--NADP reductase type 2 family. As to quaternary structure, homodimer. FAD serves as cofactor.

The catalysed reaction is 2 reduced [2Fe-2S]-[ferredoxin] + NADP(+) + H(+) = 2 oxidized [2Fe-2S]-[ferredoxin] + NADPH. The polypeptide is Ferredoxin--NADP reductase (Enterococcus faecalis (strain ATCC 700802 / V583)).